Consider the following 446-residue polypeptide: Ribosomal protein uS12 methylthiotransferase RimO (446 aa).

Residues 6-116 (PNIGFISLGC…VMQQVHKYVP (111 aa)) enclose the MTTase N-terminal domain. [4Fe-4S] cluster is bound by residues cysteine 15, cysteine 51, cysteine 80, cysteine 148, cysteine 152, and cysteine 155. A Radical SAM core domain is found at 134–375 (LTPKHYAYLK…MQLQQEISAA (242 aa)). A TRAM domain is found at 378–446 (QQKVGKVFTV…AYDLYASLIN (69 aa)).

The protein belongs to the methylthiotransferase family. RimO subfamily. The cofactor is [4Fe-4S] cluster.

Its subcellular location is the cytoplasm. It catalyses the reaction L-aspartate(89)-[ribosomal protein uS12]-hydrogen + (sulfur carrier)-SH + AH2 + 2 S-adenosyl-L-methionine = 3-methylsulfanyl-L-aspartate(89)-[ribosomal protein uS12]-hydrogen + (sulfur carrier)-H + 5'-deoxyadenosine + L-methionine + A + S-adenosyl-L-homocysteine + 2 H(+). In terms of biological role, catalyzes the methylthiolation of an aspartic acid residue of ribosomal protein uS12. This is Ribosomal protein uS12 methylthiotransferase RimO from Pasteurella multocida (strain Pm70).